The chain runs to 478 residues: Sulfate adenylyltransferase subunit 1 (478 aa).

A tr-type G domain is found at Lys-24 to Asp-240. Residues Gly-33–Ser-40 form a G1 region. Gly-33–Ser-40 serves as a coordination point for GTP. Residues Gly-91–Asp-95 form a G2 region. Residues Asp-112–Gly-115 form a G3 region. GTP contacts are provided by residues Asp-112–His-116 and Asn-167–Asp-170. Residues Asn-167–Asp-170 are G4. Residues Ser-206–Leu-208 are G5.

It belongs to the TRAFAC class translation factor GTPase superfamily. Classic translation factor GTPase family. CysN/NodQ subfamily. Heterodimer composed of CysD, the smaller subunit, and CysN.

It catalyses the reaction sulfate + ATP + H(+) = adenosine 5'-phosphosulfate + diphosphate. It participates in sulfur metabolism; hydrogen sulfide biosynthesis; sulfite from sulfate: step 1/3. In terms of biological role, with CysD forms the ATP sulfurylase (ATPS) that catalyzes the adenylation of sulfate producing adenosine 5'-phosphosulfate (APS) and diphosphate, the first enzymatic step in sulfur assimilation pathway. APS synthesis involves the formation of a high-energy phosphoric-sulfuric acid anhydride bond driven by GTP hydrolysis by CysN coupled to ATP hydrolysis by CysD. In Aliivibrio fischeri (strain ATCC 700601 / ES114) (Vibrio fischeri), this protein is Sulfate adenylyltransferase subunit 1.